The primary structure comprises 142 residues: NTF2-related export protein 2 (142 aa).

The NTF2 domain occupies 17 to 136; the sequence is AAEEFVNIYY…WKIASDCFRF (120 aa).

As to quaternary structure, associates with NXF1, NXF2, NXF3 and NXF5.

The protein localises to the nucleus. It is found in the cytoplasm. Regulator of protein export for NES-containing proteins. Also plays a role in mRNA nuclear export. This chain is NTF2-related export protein 2, found in Homo sapiens (Human).